A 193-amino-acid chain; its full sequence is Ion-translocating oxidoreductase complex subunit A (193 aa).

A run of 6 helical transmembrane segments spans residues 5–25 (LMLL…FLGL), 39–59 (IGMG…TWLI), 62–82 (FLLV…LVIA), 102–122 (VLGI…VALL), 134–154 (VLYG…FAGL), and 170–190 (APIS…FAGL).

It belongs to the NqrDE/RnfAE family. The complex is composed of six subunits: RnfA, RnfB, RnfC, RnfD, RnfE and RnfG.

The protein resides in the cell inner membrane. In terms of biological role, part of a membrane-bound complex that couples electron transfer with translocation of ions across the membrane. The polypeptide is Ion-translocating oxidoreductase complex subunit A (Azoarcus sp. (strain BH72)).